The primary structure comprises 261 residues: Glutamate racemase (261 aa).

Residues 12 to 13 and 44 to 45 each bind substrate; these read DS and YG. The Proton donor/acceptor role is filled by Cys-76. Substrate is bound at residue 77-78; it reads NT. The Proton donor/acceptor role is filled by Cys-180. A substrate-binding site is contributed by 181-182; it reads TH.

Belongs to the aspartate/glutamate racemases family.

It catalyses the reaction L-glutamate = D-glutamate. It participates in cell wall biogenesis; peptidoglycan biosynthesis. In terms of biological role, provides the (R)-glutamate required for cell wall biosynthesis. The chain is Glutamate racemase from Borreliella burgdorferi (strain ATCC 35210 / DSM 4680 / CIP 102532 / B31) (Borrelia burgdorferi).